The sequence spans 250 residues: 3-deoxy-manno-octulosonate cytidylyltransferase (250 aa).

Belongs to the KdsB family.

Its subcellular location is the cytoplasm. The catalysed reaction is 3-deoxy-alpha-D-manno-oct-2-ulosonate + CTP = CMP-3-deoxy-beta-D-manno-octulosonate + diphosphate. Its pathway is nucleotide-sugar biosynthesis; CMP-3-deoxy-D-manno-octulosonate biosynthesis; CMP-3-deoxy-D-manno-octulosonate from 3-deoxy-D-manno-octulosonate and CTP: step 1/1. It participates in bacterial outer membrane biogenesis; lipopolysaccharide biosynthesis. Its function is as follows. Activates KDO (a required 8-carbon sugar) for incorporation into bacterial lipopolysaccharide in Gram-negative bacteria. The sequence is that of 3-deoxy-manno-octulosonate cytidylyltransferase from Geobacter sulfurreducens (strain ATCC 51573 / DSM 12127 / PCA).